The sequence spans 669 residues: Zinc finger CCCH domain-containing protein 17 (669 aa).

Over residues 1 to 11 (MFAPATQPQQQ) the composition is skewed to low complexity. Residues 1 to 23 (MFAPATQPQQQHEQKKQSETVSS) form a disordered region. C3H1-type zinc fingers lie at residues 34–58 (DCVY…HSEY), 60–86 (RMNP…HPPL), and 114–141 (AKQP…HTPN). 4 disordered regions span residues 150–175 (PVEA…EKKL), 285–306 (VEDR…PDFS), 376–589 (GMRL…VMEE), and 642–669 (EEGE…EMLS). Basic and acidic residues-rich tracts occupy residues 164–175 (KPIENNTEEKKL), 285–299 (VEDR…RGNS), 392–406 (SMDR…DTPR), 420–464 (KLRE…EENH), 478–499 (RRRE…ESKP), and 547–579 (NNKD…PKAE). 2 stretches are compositionally biased toward acidic residues: residues 580 to 589 (VEEEGTVMEE) and 642 to 659 (EEGE…GEED). Residues 660-669 (IEKKTVEMLS) are compositionally biased toward basic and acidic residues.

This chain is Zinc finger CCCH domain-containing protein 17, found in Arabidopsis thaliana (Mouse-ear cress).